The sequence spans 597 residues: MSVDSSSTHRHRCVAARLVPLAAAGAAVTVAVGTAAAWAHAGAVQHRCIHDAMQARVRQSVAAQRMAPSAVSAVGLPHVTLDAGNTAAGADPSTGTANVVRAANWGALRIAVSAEDLTDPAYHCARVGQRVNNHVGDIVTCTAEDILTDEKRDILVKHLVPQALQLHRERLKVQQVQGKWKVTGMTADVCRYFKVPPAHVTGGVTNTDFVLYVASVPSEESVLAWATTCQVFADGHPAVGVINIPAANIASRYDQLVTRVVAHEMAHALGFSGTFFDRVGIVQKVPDVRGKPYFTPMINSSTAVAKAREQYGCNSLEYLEMEDQGSAAPGSHIKANAQDELMAPTASAGYYTALTMAVFQDLGFYQADFSKAEAMPWGRNAACAFLSEKCMANGITKWPAMFCNESADAIRCPTSRLGVGMCDVTPYQALPPYLQYFTDPFLAGSSAFMDYCPVVVPYADGSCAQSASEADAAFKAFNVFSDAAACIDGAFRPKTTHGLIKSYAALCANVKCDTAARTYSVQVRGSSGYANCTPGLRFDLSTVSDAFEKGGYVTCPPYVEVCQGNAQAIKDGGNAAGRRGPRAATALVVAALLAVAL.

Residues 1 to 39 form the signal peptide; sequence MSVDSSSTHRHRCVAARLVPLAAAGAAVTVAVGTAAAWA. The propeptide at 40-99 is activation peptide; sequence HAGAVQHRCIHDAMQARVRQSVAAQRMAPSAVSAVGLPHVTLDAGNTAAGADPSTGTANV. Disulfide bonds link C124/C141 and C190/C229. Zn(2+) is bound at residue H263. Residue E264 is part of the active site. H267 provides a ligand contact to Zn(2+). A glycan (N-linked (GlcNAc...) asparagine) is linked at N299. 7 cysteine pairs are disulfide-bonded: C313–C383, C390–C452, C403–C422, C412–C486, C463–C507, C512–C562, and C532–C555. Zn(2+) is bound at residue H332. Residue N404 is glycosylated (N-linked (GlcNAc...) asparagine). N574 is lipidated: GPI-anchor amidated asparagine. Positions 575–597 are cleaved as a propeptide — removed in mature form; sequence AAGRRGPRAATALVVAALLAVAL.

The protein belongs to the peptidase M8 family. The cofactor is Zn(2+).

The protein localises to the cell membrane. It carries out the reaction Preference for hydrophobic residues at P1 and P1' and basic residues at P2' and P3'. A model nonapeptide is cleaved at -Ala-Tyr-|-Leu-Lys-Lys-.. Its function is as follows. Has an integral role during the infection of macrophages in the mammalian host. The protein is Leishmanolysin (gp63) of Leishmania amazonensis.